Consider the following 611-residue polypeptide: DNA mismatch repair protein MutL (611 aa).

The interval 353–387 (NRQAAGGNHFATPAPAAAPRPASTASSSWQRQEPV) is disordered. Positions 363–380 (ATPAPAAAPRPASTASSS) are enriched in low complexity.

Belongs to the DNA mismatch repair MutL/HexB family.

Functionally, this protein is involved in the repair of mismatches in DNA. It is required for dam-dependent methyl-directed DNA mismatch repair. May act as a 'molecular matchmaker', a protein that promotes the formation of a stable complex between two or more DNA-binding proteins in an ATP-dependent manner without itself being part of a final effector complex. The chain is DNA mismatch repair protein MutL from Erwinia tasmaniensis (strain DSM 17950 / CFBP 7177 / CIP 109463 / NCPPB 4357 / Et1/99).